Here is a 423-residue protein sequence, read N- to C-terminus: Sphingomyelin phosphodiesterase 2 (423 aa).

Glu-49 lines the Mg(2+) pocket. His-272 acts as the Proton acceptor in catalysis. The next 2 membrane-spanning stretches (helical) occupy residues 330 to 350 (VIGL…GGGA) and 354 to 374 (AILL…FYLF). The interval 400–423 (QDLGPEPQPALLLGQQEGDRTKEQ) is disordered.

It belongs to the neutral sphingomyelinase family. Mg(2+) is required as a cofactor.

It localises to the cell membrane. The enzyme catalyses a sphingomyelin + H2O = phosphocholine + an N-acylsphing-4-enine + H(+). The catalysed reaction is an N-(acyl)-sphingosylphosphocholine + H2O = an N-acyl-sphingoid base + phosphocholine + H(+). It carries out the reaction 1-O-octadecyl-sn-glycero-3-phosphocholine + H2O = 1-O-octadecyl-sn-glycerol + phosphocholine + H(+). It catalyses the reaction 1-O-hexadecyl-sn-glycero-3-phosphocholine + H2O = 1-O-hexadecyl-sn-glycerol + phosphocholine + H(+). The enzyme catalyses 1-hexadecanoyl-sn-glycero-3-phosphocholine + H2O = 1-hexadecanoyl-sn-glycerol + phosphocholine + H(+). The catalysed reaction is a sphingosylphosphocholine + H2O = a sphingoid base + phosphocholine + H(+). It participates in lipid metabolism; sphingolipid metabolism. Functionally, catalyzes, at least in vitro, the hydrolysis of sphingomyelin to form ceramide and phosphocholine. Also hydrolyzes 1-O-alkyl-2-lyso-sn-glycero-3-phosphocholine (lyso-platelet-activating factor) in vivo. Also acts on 1-acyl-2-lyso-sn-glycero-3-phosphocholine (lyso-PC) and sphingosylphosphocholine. The chain is Sphingomyelin phosphodiesterase 2 from Homo sapiens (Human).